The following is a 380-amino-acid chain: Gibberellin 20 oxidase 3 (380 aa).

The 101-residue stretch at 221–321 (DSDSIFRLNY…RKTFAFFLCP (101 aa)) folds into the Fe2OG dioxygenase domain. Positions 246, 248, and 302 each coordinate Fe cation. Residue R312 is part of the active site.

This sequence belongs to the iron/ascorbate-dependent oxidoreductase family. GA20OX subfamily. The cofactor is Fe(2+). L-ascorbate serves as cofactor. As to expression, expressed at high level in developing siliques. Detected in seeds, roots, leaves and inflorescences. In seeds, specifically detected at the outer layer of the outer integument.

The enzyme catalyses gibberellin A12 + 2 2-oxoglutarate + 3 O2 + H(+) = gibberellin A9 + 2 succinate + 3 CO2 + 2 H2O. It carries out the reaction gibberellin A12 + 3 2-oxoglutarate + 3 O2 = gibberellin A25 + 3 succinate + 3 CO2 + H2O + H(+). It catalyses the reaction gibberellin A53 + 2 2-oxoglutarate + 3 O2 + H(+) = gibberellin A20 + 2 succinate + 3 CO2 + 2 H2O. It functions in the pathway plant hormone biosynthesis; gibberellin biosynthesis. Functionally, key oxidase enzyme in the biosynthesis of gibberellin that catalyzes the conversion of GA12 and GA53 to GA9 and GA20 respectively, via a three-step oxidation at C-20 of the GA skeleton, and GA25 is also formed as a minor product. GA53 is less effectively oxidized than GA12. This chain is Gibberellin 20 oxidase 3 (GA20OX3), found in Arabidopsis thaliana (Mouse-ear cress).